A 286-amino-acid chain; its full sequence is Nucleoid occlusion protein (286 aa).

Residues 147–166 constitute a DNA-binding region (H-T-H motif); it reads EALAQRLGKNQSTVANKLRL.

It belongs to the ParB family.

The protein localises to the cytoplasm. Its subcellular location is the nucleoid. In terms of biological role, effects nucleoid occlusion by binding relatively nonspecifically to DNA and preventing the assembly of the division machinery in the vicinity of the nucleoid, especially under conditions that disturb the cell cycle. It helps to coordinate cell division and chromosome segregation by preventing the formation of the Z ring through the nucleoid, which would cause chromosome breakage. This chain is Nucleoid occlusion protein, found in Oceanobacillus iheyensis (strain DSM 14371 / CIP 107618 / JCM 11309 / KCTC 3954 / HTE831).